We begin with the raw amino-acid sequence, 118 residues long: Protein YLR162W (118 aa).

A compositionally biased stretch (polar residues) spans 1–20 (MQHTLTRTASLPERSSSAHS). Residues 1-26 (MQHTLTRTASLPERSSSAHSAATALP) form a disordered region. The chain crosses the membrane as a helical span at residues 38 to 58 (LVPLLCIFWFVFVSMSPLPPA).

It is found in the membrane. In terms of biological role, overexpression confers resistance to the antimicrobial peptide MiAMP1. In Saccharomyces cerevisiae (strain ATCC 204508 / S288c) (Baker's yeast), this protein is Protein YLR162W.